A 236-amino-acid polypeptide reads, in one-letter code: Small ribosomal subunit protein uS2c (236 aa).

The protein belongs to the universal ribosomal protein uS2 family.

The protein localises to the plastid. The protein resides in the chloroplast. The sequence is that of Small ribosomal subunit protein uS2c (rps2) from Cucumis sativus (Cucumber).